The chain runs to 901 residues: Glutamate receptor 2.1 (901 aa).

The N-terminal stretch at 1 to 25 (MKRENNLVLSLLFFVIVFLMQVGEA) is a signal peptide. At 26–574 (QNRITNVNVG…SSTIFLMPLT (549 aa)) the chain is on the extracellular side. Residues N46, N53, N204, N267, N331, N342, N461, N477, and N536 are each glycosylated (N-linked (GlcNAc...) asparagine). The chain crosses the membrane as a helical span at residues 575-595 (LALWLISLLSFFIIGLVVWVL). Over 596 to 604 (EHRVNPDFD) the chain is Cytoplasmic. A helical membrane pass occupies residues 605–625 (GPGQYQLSTIFWFSFSIMVFA). At 626–629 (PRER) the chain is on the cytoplasmic side. Residues 630–650 (VLSFWARVVVIIWYFLVLVLT) traverse the membrane as a helical segment. The Extracellular segment spans residues 651–823 (QSYTASLASL…VSFRQLGFDS (173 aa)). The helical transmembrane segment at 824–844 (FWVLFLVAAIVCTMALLKFVY) threads the bilayer. Residues 845 to 901 (QFLKENPNQRNLRVLWEKFNEPDQKSYIKDVTKCQCSSGQGMPKNGQEGANAVNNGN) are Cytoplasmic-facing.

This sequence belongs to the glutamate-gated ion channel (TC 1.A.10.1) family. May form heteromers. As to expression, expressed predominantly in roots. First strongly detected in all cell types of the root except at the apex. Later expressed at the root-shoot junction.

It is found in the membrane. In terms of biological role, glutamate-gated receptor that probably acts as a non-selective cation channel. May be involved in light-signal transduction and calcium homeostasis via the regulation of calcium influx into cells. The polypeptide is Glutamate receptor 2.1 (GLR2.1) (Arabidopsis thaliana (Mouse-ear cress)).